A 625-amino-acid chain; its full sequence is DNA-directed RNA polymerase subunit gamma (625 aa).

Zn(2+) is bound by residues C71, C73, C86, and C89. 3 residues coordinate Mg(2+): D467, D469, and D471.

This sequence belongs to the RNA polymerase beta' chain family. RpoC1 subfamily. As to quaternary structure, in cyanobacteria the RNAP catalytic core is composed of 2 alpha, 1 beta, 1 beta', 1 gamma and 1 omega subunit. When a sigma factor is associated with the core the holoenzyme is formed, which can initiate transcription. The cofactor is Mg(2+). It depends on Zn(2+) as a cofactor.

The catalysed reaction is RNA(n) + a ribonucleoside 5'-triphosphate = RNA(n+1) + diphosphate. Its function is as follows. DNA-dependent RNA polymerase catalyzes the transcription of DNA into RNA using the four ribonucleoside triphosphates as substrates. The polypeptide is DNA-directed RNA polymerase subunit gamma (Nostoc punctiforme (strain ATCC 29133 / PCC 73102)).